The following is a 102-amino-acid chain: MPGQKIRIRLRAYDHRLLDESAKKIVEVAKQTNAKVSGPIPLPTERSLYVVLRSPLKHKDSREQFEKKVHKRLIDIIEPNSKTIDALMKINLPAGVDVEINL.

Belongs to the universal ribosomal protein uS10 family. Part of the 30S ribosomal subunit.

Involved in the binding of tRNA to the ribosomes. This is Small ribosomal subunit protein uS10 from Fervidobacterium nodosum (strain ATCC 35602 / DSM 5306 / Rt17-B1).